The primary structure comprises 448 residues: Nicotinate phosphoribosyltransferase pncB1 (448 aa).

Residues 1–21 (MGPPPAARRREGEPDNQDPAG) are disordered. Phosphohistidine is present on His-212. Residues 353 to 372 (RSSYKESPGGRKEALRRSRA) are disordered.

The protein belongs to the NAPRTase family. Transiently phosphorylated on a His residue during the reaction cycle. Phosphorylation strongly increases the affinity for substrates and increases the rate of nicotinate D-ribonucleotide production. Dephosphorylation regenerates the low-affinity form of the enzyme, leading to product release.

The catalysed reaction is nicotinate + 5-phospho-alpha-D-ribose 1-diphosphate + ATP + H2O = nicotinate beta-D-ribonucleotide + ADP + phosphate + diphosphate. The protein operates within cofactor biosynthesis; NAD(+) biosynthesis; nicotinate D-ribonucleotide from nicotinate: step 1/1. Its function is as follows. Involved in the Preiss-Handler pathway, which is a recycling route that permits the salvage of free nicotinamide (NM) and nicotinic acid (Na) involved in the NAD biosynthesis. Catalyzes the synthesis of beta-nicotinate D-ribonucleotide from nicotinate and 5-phospho-D-ribose 1-phosphate at the expense of ATP. It is not able to use nicotinamide. PncB1 contributes to basal NAD level. This Mycobacterium tuberculosis (strain ATCC 25618 / H37Rv) protein is Nicotinate phosphoribosyltransferase pncB1 (pncB1).